The chain runs to 203 residues: uncharacterized protein (203 aa).

The chain crosses the membrane as a helical span at residues 180 to 200 (VYLLLFGIPLLILIFLIIFFI).

The protein resides in the virion. The protein localises to the host membrane. This is an uncharacterized protein from Acanthamoeba polyphaga (Amoeba).